A 350-amino-acid chain; its full sequence is Erythronate-4-phosphate dehydrogenase (350 aa).

Positions 45 and 66 each coordinate substrate. Residues 124–125, Asp-144, 203–205, and Asp-226 contribute to the NAD(+) site; these read QV and ASR. Arg-205 is an active-site residue. Glu-231 is an active-site residue. The active-site Proton donor is the His-248. Gly-251 is an NAD(+) binding site.

It belongs to the D-isomer specific 2-hydroxyacid dehydrogenase family. PdxB subfamily. Homodimer.

Its subcellular location is the cytoplasm. The enzyme catalyses 4-phospho-D-erythronate + NAD(+) = (R)-3-hydroxy-2-oxo-4-phosphooxybutanoate + NADH + H(+). The protein operates within cofactor biosynthesis; pyridoxine 5'-phosphate biosynthesis; pyridoxine 5'-phosphate from D-erythrose 4-phosphate: step 2/5. Catalyzes the oxidation of erythronate-4-phosphate to 3-hydroxy-2-oxo-4-phosphonooxybutanoate. This is Erythronate-4-phosphate dehydrogenase from Legionella pneumophila subsp. pneumophila (strain Philadelphia 1 / ATCC 33152 / DSM 7513).